The chain runs to 413 residues: MNHLKRQDEKVFAAIEAELGRQRSKIELIASENFVSEAVMEAQGSVLTNKYAEGYPGKRYYGGCEHVDVVEDIARDRAKEIFGAEHVNVQPHSGAQANMAVYFTILEQGDTVLGMNLSHGGHLTHGSPVNFSGVQYNFVEYGVDAESHRINYDDVLAKAKEHKPKLIVAGASAYPRVIDFKRFREIADEVGAYFMVDMAHIAGLVAAGLHPNPVPHAHFVTTTTHKTLRGPRGGMILCEEQFAKQIDKSIFPGIQGGPLMHVIAAKAVAFGETLQDEFKTYAQHIINNANRLAEGLQKEGLTLVSGGTDNHLILIDVRNLEITGKVAEHVLDEVGITVNKNTIPFETASPFVTSGVRIGTAAVTSRGFGLEEMDEIAALIAYTLKNHENEVALEEASKRVEALTSKFSMYTDL.

(6S)-5,6,7,8-tetrahydrofolate-binding positions include Leu-117 and 121–123 (GHL). The residue at position 226 (Lys-226) is an N6-(pyridoxal phosphate)lysine. (6S)-5,6,7,8-tetrahydrofolate contacts are provided by residues Glu-239 and 349 to 351 (SPF).

Belongs to the SHMT family. In terms of assembly, homodimer. Pyridoxal 5'-phosphate is required as a cofactor.

Its subcellular location is the cytoplasm. The catalysed reaction is (6R)-5,10-methylene-5,6,7,8-tetrahydrofolate + glycine + H2O = (6S)-5,6,7,8-tetrahydrofolate + L-serine. It functions in the pathway one-carbon metabolism; tetrahydrofolate interconversion. The protein operates within amino-acid biosynthesis; glycine biosynthesis; glycine from L-serine: step 1/1. In terms of biological role, catalyzes the reversible interconversion of serine and glycine with tetrahydrofolate (THF) serving as the one-carbon carrier. This reaction serves as the major source of one-carbon groups required for the biosynthesis of purines, thymidylate, methionine, and other important biomolecules. Also exhibits THF-independent aldolase activity toward beta-hydroxyamino acids, producing glycine and aldehydes, via a retro-aldol mechanism. The sequence is that of Serine hydroxymethyltransferase from Bacillus mycoides (strain KBAB4) (Bacillus weihenstephanensis).